A 255-amino-acid chain; its full sequence is Cyclic di-GMP phosphodiesterase PdeH (255 aa).

Residues 13–255 enclose the EAL domain; it reads EASIESLQER…ETLNTAVLAL (243 aa).

It carries out the reaction 3',3'-c-di-GMP + H2O = 5'-phosphoguanylyl(3'-&gt;5')guanosine + H(+). Its function is as follows. Involved in the control of the switch from cell motility to adhesion via regulation of cellular levels of cyclic-di-GMP (c-di-GMP). Part of a signaling cascade that regulates curli biosynthesis. The cascade is composed of two c-di-GMP control modules, in which c-di-GMP controlled by the DgcE/PdeH pair (module I) regulates the activity of the DgcM/PdeR pair (module II), which in turn regulates activity of the transcription factor MlrA and expression of the master biofilm regulator csgD. Effect on flagella is controlled via the c-di-GMP-binding flagellar brake protein YcgR. The chain is Cyclic di-GMP phosphodiesterase PdeH from Escherichia coli (strain K12).